Consider the following 2633-residue polypeptide: Non-reducing polyketide synthase sor2 (2633 aa).

The interval 67-237 is N-terminal acylcarrier protein transacylase domain (SAT); it reads VSNAQKLAEW…TTSTRTVAAL (171 aa). The active-site Nucleophile; for transacylase activity is Cys-140. The active-site Proton donor/acceptor; for transacylase activity is His-258. Residues 389–814 enclose the Ketosynthase family 3 (KS3) domain; it reads ENDIAVIGMA…GSNASVIIKQ (426 aa). Active-site for beta-ketoacyl synthase activity residues include Cys-561, His-696, and His-737. A malonyl-CoA:ACP transacylase (MAT) domain region spans residues 928-1239; that stretch reads CFGGQVSTFV…SKASSQLSDV (312 aa). Residues 1307–1437 are N-terminal hotdog fold; that stretch reads PQPVGLYTLL…GQLHFQASDD (131 aa). Positions 1307 to 1627 constitute a PKS/mFAS DH domain; that stretch reads PQPVGLYTLL…YAPVSLDQLF (321 aa). The tract at residues 1338–1509 is product template (PT) domain; the sequence is MSDHAIGKAQ…SNESAGRLVR (172 aa). Positions 1464–1627 are C-terminal hotdog fold; sequence GRSDEVIQGQ…YAPVSLDQLF (164 aa). Residues 1684-1758 form the Carrier domain; the sequence is EELWLRLRPV…GILKFLQSTL (75 aa). Ser-1718 carries the O-(pantetheine 4'-phosphoryl)serine modification. The tract at residues 1762–1792 is disordered; it reads DVHDSSETMSTVSSDGNVHSPPTSGSEMASP. The span at 1768–1790 shows a compositional bias: polar residues; sequence ETMSTVSSDGNVHSPPTSGSEMA. The interval 1982–2166 is methyltransferase domain; it reads FELMADFLTR…ASGFKHVRWT (185 aa). The segment at 2253–2495 is NADPH-binding (R) domain; it reads VTGATGSLGS…TLRALPDVDG (243 aa).

It depends on pantetheine 4'-phosphate as a cofactor.

It participates in secondary metabolite biosynthesis. In terms of biological role, non-reducing polyketide synthase; part of the SOR gene cluster that mediates the biosynthesis of sorbicillinoids, a diverse group of yellow secondary metabolites that restrict growth of competing pathogenic fungi but not of bacteria. Sorbicillinoids biosynthesis requires the action of two PKSs. The SOR cluster is required for the production of trichodimerol and dihydrotrichotetronin, with sor2 being sufficient for production of trichodimerol, but not dihydrotrichotetronin in the light. Sor1 iteratively combines three acetyl units and the growing chain is modified by the ketoacyl reductase subunit, and optional by the enoyl reductase subunit in the second cycle. The polyketide is then handed over to the PKS sor2, which adds three more acetyl units, and two methyl groups. Sor2 releases an aldehyde, which undergoes spontaneous cyclization resulting in the formation of sorbicillin or 2',3'-dihydrosorbicillin. The monooxygenase sor5 oxidizes sorbicillin and 2',3'-dihydrosorbicillin to 2',3'-dihydrosorbicillinol and sorbicillinol, respectively. The oxidoreductase sor8 further converts sorbicillinol into oxosorbicillinol. Sorbicillinol is the building block for the other sorbicillinoids such as disorbicillinol, bisvertinolon, dihydrobisvertinolone, and dihydrotrichotetronine. The chain is Non-reducing polyketide synthase sor2 from Hypocrea jecorina (strain QM6a) (Trichoderma reesei).